The following is a 66-amino-acid chain: Large ribosomal subunit protein uL29 (66 aa).

Belongs to the universal ribosomal protein uL29 family.

This Borrelia turicatae (strain 91E135) protein is Large ribosomal subunit protein uL29.